The primary structure comprises 426 residues: L-cysteine:1D-myo-inositol 2-amino-2-deoxy-alpha-D-glucopyranoside ligase (426 aa).

A Zn(2+)-binding site is contributed by Cys43. Residues 43-46 (CGIT), Ser58, and 81-83 (NVT) contribute to the L-cysteinyl-5'-AMP site. A 'HIGH' region motif is present at residues 45 to 55 (ITPYDATHMGH). Positions 200 to 205 (ERGGDP) match the 'ERGGDP' region motif. Position 241 (Trp241) interacts with L-cysteinyl-5'-AMP. Cys245 provides a ligand contact to Zn(2+). Position 263-265 (263-265 (GSD)) interacts with L-cysteinyl-5'-AMP. A Zn(2+)-binding site is contributed by His270. Val296 is an L-cysteinyl-5'-AMP binding site. Residues 302–306 (KMSKS) carry the 'KMSKS' region motif.

The protein belongs to the class-I aminoacyl-tRNA synthetase family. MshC subfamily. As to quaternary structure, monomer. Zn(2+) serves as cofactor.

The enzyme catalyses 1D-myo-inositol 2-amino-2-deoxy-alpha-D-glucopyranoside + L-cysteine + ATP = 1D-myo-inositol 2-(L-cysteinylamino)-2-deoxy-alpha-D-glucopyranoside + AMP + diphosphate + H(+). Catalyzes the ATP-dependent condensation of GlcN-Ins and L-cysteine to form L-Cys-GlcN-Ins. This is L-cysteine:1D-myo-inositol 2-amino-2-deoxy-alpha-D-glucopyranoside ligase from Arthrobacter sp. (strain FB24).